The primary structure comprises 292 residues: Elongation factor Ts (292 aa).

An involved in Mg(2+) ion dislocation from EF-Tu region spans residues 79 to 82 (TDFV).

This sequence belongs to the EF-Ts family.

The protein resides in the cytoplasm. Functionally, associates with the EF-Tu.GDP complex and induces the exchange of GDP to GTP. It remains bound to the aminoacyl-tRNA.EF-Tu.GTP complex up to the GTP hydrolysis stage on the ribosome. This chain is Elongation factor Ts, found in Xanthomonas campestris pv. campestris (strain ATCC 33913 / DSM 3586 / NCPPB 528 / LMG 568 / P 25).